A 390-amino-acid polypeptide reads, in one-letter code: F-box/kelch-repeat protein At3g06570 (390 aa).

The F-box domain maps to serine 23–arginine 69. Kelch repeat units lie at residues aspartate 140–arginine 183, isoleucine 185–alanine 234, and isoleucine 236–asparagine 281.

This Arabidopsis thaliana (Mouse-ear cress) protein is F-box/kelch-repeat protein At3g06570.